Consider the following 1004-residue polypeptide: Ovochymase-2 (1004 aa).

The signal sequence occupies residues 1–19 (MPTRNLLLGSILLSLAVKG). Positions 20-45 (DPGPHRGARCGVSPLGSATELNYLSR) are cleaved as a propeptide — activation peptide. Residues 46–295 (IVGGRESKKG…LLGWVSSQLN (250 aa)) form the Peptidase S1 1 domain. Residues Cys-71 and Cys-87 are joined by a disulfide bond. His-86 acts as the Charge relay system in catalysis. Glu-113 lines the Ca(2+) pocket. Asn-128 carries an N-linked (GlcNAc...) asparagine glycan. Residue Asp-136 is the Charge relay system of the active site. 3 disulfides stabilise this stretch: Cys-170/Cys-240, Cys-201/Cys-219, and Cys-230/Cys-259. Residue Ser-234 is the Charge relay system of the active site. 2 consecutive CUB domains span residues 309–419 (QDGV…YSAV) and 429–541 (CGSF…FTFV). A glycan (N-linked (GlcNAc...) asparagine) is linked at Asn-351. An intrachain disulfide couples Cys-363 to Cys-382. N-linked (GlcNAc...) asparagine glycosylation occurs at Asn-408. Intrachain disulfides connect Cys-429–Cys-456 and Cys-483–Cys-504. Residues 547 to 558 (VEDSRQGNMPST) show a composition bias toward polar residues. Positions 547 to 566 (VEDSRQGNMPSTNKKETTAQ) are disordered. In terms of domain architecture, Peptidase S1 2 spans 580–820 (IYNSIAKVEE…FIDWIRQIMS (241 aa)). Positions 584–1004 (IAKVEEAVPH…VVPDSDSSEP (421 aa)) are cleaved as a propeptide — activation peptide. Intrachain disulfides connect Cys-609–Cys-625, Cys-706–Cys-776, Cys-737–Cys-754, and Cys-766–Cys-796. Asn-763 carries an N-linked (GlcNAc...) asparagine glycan. An N-linked (GlcNAc...) asparagine glycan is attached at Asn-940.

The protein belongs to the peptidase S1 family. In terms of processing, the catalytically inactive 110 kDa form is processed both N- and C-terminally to give rise to the 66 kDa catalytically active form. In terms of tissue distribution, specifically expressed in the pars recta oviduct.

The protein resides in the secreted. It carries out the reaction Preferential cleavage at 371-Gly-Ser-Arg-|-Trp-374 of glycoprotein gp43 in Xenopus laevis coelemic egg envelope to yield gp41.. Functionally, converts the glycoprotein envelope surrounding the egg from an unfertilizable to a fertilizable form during its transit through the pars recta portion of the oviduct by selectively hydrolyzing the envelope glycoprotein gp43. The egg envelope is converted to a sperm-penetrable form, via an increase in sperm binding. The sequence is that of Ovochymase-2 (ovch2) from Xenopus laevis (African clawed frog).